Here is a 164-residue protein sequence, read N- to C-terminus: Endoribonuclease YbeY (164 aa).

Positions 114, 118, and 124 each coordinate Zn(2+).

It belongs to the endoribonuclease YbeY family. The cofactor is Zn(2+).

It is found in the cytoplasm. In terms of biological role, single strand-specific metallo-endoribonuclease involved in late-stage 70S ribosome quality control and in maturation of the 3' terminus of the 16S rRNA. This chain is Endoribonuclease YbeY, found in Mycoplasmoides gallisepticum (strain R(low / passage 15 / clone 2)) (Mycoplasma gallisepticum).